Here is a 249-residue protein sequence, read N- to C-terminus: Pleckstrin homology domain-containing family F member 2 (249 aa).

Position 16 is a phosphoserine (Ser16). Residues 35–131 (VLIGEGVLTK…WMNHINKCVT (97 aa)) form the PH domain. N6-acetyllysine is present on Lys44. An FYVE-type zinc finger spans residues 152-212 (DSEATVCMRC…ICDFCYDLLS (61 aa)). Residues Cys158, Cys161, Cys175, Cys178, Cys183, Cys186, Cys204, and Cys207 each contribute to the Zn(2+) site. Positions 221–233 (PARSDSYSQSLKS) are enriched in polar residues. A disordered region spans residues 221–249 (PARSDSYSQSLKSPLNDMSDDDDDDDSSD). Residues 238 to 249 (MSDDDDDDDSSD) show a composition bias toward acidic residues. Residues Ser239 and Ser248 each carry the phosphoserine modification.

As to quaternary structure, may interact with EEA1. As to expression, expressed in placenta, ovary and small intestine, as well as in heart and pancreas. Also expressed in peripheral blood mononuclear cells and dendritic cells.

It localises to the early endosome membrane. It is found in the endoplasmic reticulum. Its function is as follows. May play a role in early endosome fusion upstream of RAB5, hence regulating receptor trafficking and fluid-phase transport. Enhances cellular sensitivity to TNF-induced apoptosis. The polypeptide is Pleckstrin homology domain-containing family F member 2 (PLEKHF2) (Homo sapiens (Human)).